We begin with the raw amino-acid sequence, 173 residues long: Mediator of RNA polymerase II transcription subunit 10 (173 aa).

Residues 1-10 (MVQQQQQSQQ) show a composition bias toward low complexity. A disordered region spans residues 1-42 (MVQQQQQSQQRMMELHERNDREKLARKTEKEREEERRKQEDD). The segment covering 13-42 (MELHERNDREKLARKTEKEREEERRKQEDD) has biased composition (basic and acidic residues).

This sequence belongs to the Mediator complex subunit 10 family. Component of the Mediator complex.

It is found in the nucleus. Functionally, component of the Mediator complex, a coactivator involved in the regulated transcription of nearly all RNA polymerase II-dependent genes. Mediator functions as a bridge to convey information from gene-specific regulatory proteins to the basal RNA polymerase II transcription machinery. Mediator is recruited to promoters by direct interactions with regulatory proteins and serves as a scaffold for the assembly of a functional preinitiation complex with RNA polymerase II and the general transcription factors. Required for germ cell development and for transcriptional activation of certain stage-specific inducible promoters. The polypeptide is Mediator of RNA polymerase II transcription subunit 10 (mdt-10) (Caenorhabditis elegans).